Reading from the N-terminus, the 206-residue chain is Small ribosomal subunit protein uS4 (206 aa).

The region spanning 96–156 (GRLDNVVYRM…EKSKKQARIK (61 aa)) is the S4 RNA-binding domain.

Belongs to the universal ribosomal protein uS4 family. Part of the 30S ribosomal subunit. Contacts protein S5. The interaction surface between S4 and S5 is involved in control of translational fidelity.

In terms of biological role, one of the primary rRNA binding proteins, it binds directly to 16S rRNA where it nucleates assembly of the body of the 30S subunit. Its function is as follows. With S5 and S12 plays an important role in translational accuracy. The polypeptide is Small ribosomal subunit protein uS4 (Haemophilus influenzae (strain 86-028NP)).